Reading from the N-terminus, the 497-residue chain is 5'-AMP-activated protein kinase subunit gamma-3 (497 aa).

The tract at residues 16-143 (STQTPSWSSF…SSSSTDDLDQ (128 aa)) is disordered. The span at 39–54 (GDSTSWPSPAMTTSAE) shows a compositional bias: polar residues. Residues 68–79 (KSQEDVEERELP) are compositionally biased toward basic and acidic residues. 3 CBS domains span residues 204–265 (MATS…RSPL), 287–345 (CFKP…QRTL), and 363–423 (TFRD…HLDI). Residues Arg-232, 247–252 (MLTITD), Val-292, 313–314 (HR), and Lys-332 each bind ADP. AMP contacts are provided by residues Arg-232, 247-252 (MLTITD), Val-292, His-313, 313-314 (HR), Lys-332, Thr-363, Ala-368, 389-390 (SA), 405-408 (SRFD), Arg-432, Leu-440, His-461, 461-462 (HR), and 477-480 (SLSD). Residues Arg-232, 247–252 (MLTITD), Val-292, 313–314 (HR), Arg-314, and Lys-332 each bind ATP. Positions 300–321 (LFEAVYTLIKNRIHRLPVLDPV) match the AMPK pseudosubstrate motif. ADP-binding positions include 405 to 408 (SRFD), Arg-432, Leu-440, and 461 to 462 (HR). ATP-binding positions include 405–408 (SRFD), Arg-432, Leu-440, and 461–462 (HR). The CBS 4 domain maps to 435 to 494 (CLEGVLSCQPHETLGEVIDRIAREQVHRLVLVDETQHLLGVVSLSDILQALVLSPAGIDA).

This sequence belongs to the 5'-AMP-activated protein kinase gamma subunit family. As to quaternary structure, AMPK is a heterotrimer of an alpha catalytic subunit (PRKAA1 or PRKAA2), a beta (PRKAB1 or PRKAB2) and a gamma non-catalytic subunits (PRKAG1, PRKAG2 or PRKAG3). Interacts with FNIP1 and FNIP2. Phosphorylated by ULK1; leading to negatively regulate AMPK activity and suggesting the existence of a regulatory feedback loop between ULK1 and AMPK. Post-translationally, glycosylated; O-GlcNAcylated by OGT, promoting the AMP-activated protein kinase (AMPK) activity.

AMP/ATP-binding subunit of AMP-activated protein kinase (AMPK), an energy sensor protein kinase that plays a key role in regulating cellular energy metabolism. In response to reduction of intracellular ATP levels, AMPK activates energy-producing pathways and inhibits energy-consuming processes: inhibits protein, carbohydrate and lipid biosynthesis, as well as cell growth and proliferation. AMPK acts via direct phosphorylation of metabolic enzymes, and by longer-term effects via phosphorylation of transcription regulators. AMPK also acts as a regulator of cellular polarity by remodeling the actin cytoskeleton; probably by indirectly activating myosin. The AMPK gamma3 subunit is a non-catalytic subunit with a regulatory role in muscle energy metabolism. It mediates binding to AMP, ADP and ATP, leading to AMPK activation or inhibition: AMP-binding results in allosteric activation of alpha catalytic subunit (PRKAA1 or PRKAA2) both by inducing phosphorylation and preventing dephosphorylation of catalytic subunits. ADP also stimulates phosphorylation, without stimulating already phosphorylated catalytic subunit. ATP promotes dephosphorylation of catalytic subunit, rendering the AMPK enzyme inactive. The sequence is that of 5'-AMP-activated protein kinase subunit gamma-3 (PRKAG3) from Bos taurus (Bovine).